Consider the following 215-residue polypeptide: Cytochrome b6 (215 aa).

Residues 32 to 52 (IFYCLGGITLTCFLVQVATGF) form a helical membrane-spanning segment. Residue C35 coordinates heme c. Heme b-binding residues include H86 and H100. A run of 3 helical transmembrane segments spans residues 90-110 (ASMM…TGGF), 116-136 (LTWV…VTGY), and 186-206 (LHTF…FPMI). 2 residues coordinate heme b: H187 and H202.

It belongs to the cytochrome b family. PetB subfamily. In terms of assembly, the 4 large subunits of the cytochrome b6-f complex are cytochrome b6, subunit IV (17 kDa polypeptide, PetD), cytochrome f and the Rieske protein, while the 4 small subunits are PetG, PetL, PetM and PetN. The complex functions as a dimer. Requires heme b as cofactor. Heme c is required as a cofactor.

Its subcellular location is the plastid. The protein localises to the chloroplast thylakoid membrane. Component of the cytochrome b6-f complex, which mediates electron transfer between photosystem II (PSII) and photosystem I (PSI), cyclic electron flow around PSI, and state transitions. The protein is Cytochrome b6 of Vitis vinifera (Grape).